The chain runs to 103 residues: NADH-quinone oxidoreductase subunit K (103 aa).

3 helical membrane-spanning segments follow: residues L6 to L26, I32 to F52, and V63 to L83.

The protein belongs to the complex I subunit 4L family. In terms of assembly, NDH-1 is composed of 14 different subunits. Subunits NuoA, H, J, K, L, M, N constitute the membrane sector of the complex.

The protein localises to the cell inner membrane. The enzyme catalyses a quinone + NADH + 5 H(+)(in) = a quinol + NAD(+) + 4 H(+)(out). NDH-1 shuttles electrons from NADH, via FMN and iron-sulfur (Fe-S) centers, to quinones in the respiratory chain. The immediate electron acceptor for the enzyme in this species is believed to be ubiquinone. Couples the redox reaction to proton translocation (for every two electrons transferred, four hydrogen ions are translocated across the cytoplasmic membrane), and thus conserves the redox energy in a proton gradient. This chain is NADH-quinone oxidoreductase subunit K, found in Ralstonia pickettii (strain 12D).